A 904-amino-acid polypeptide reads, in one-letter code: Phosphoenolpyruvate carboxylase (904 aa).

The segment at 52-71 (ISRRESDAPPSTLSEQLTGR) is disordered. Residues histidine 151 and lysine 570 contribute to the active site.

It belongs to the PEPCase type 1 family. Mg(2+) serves as cofactor.

The enzyme catalyses oxaloacetate + phosphate = phosphoenolpyruvate + hydrogencarbonate. Forms oxaloacetate, a four-carbon dicarboxylic acid source for the tricarboxylic acid cycle. This chain is Phosphoenolpyruvate carboxylase, found in Xanthomonas oryzae pv. oryzae (strain MAFF 311018).